The primary structure comprises 718 residues: MSNTLTTERNITNSPTAAQLNEKESGKKEEEWIVGVLTTSDRVSQGIAIDQSGPEIVAIIKNQLKQMMGESCSINVITVYKVVPDEIEHIQQMITQWTHLKYKLILTTGGTGFTPRDVTPEAIKPLLNRRTKGIEIAMLKTSLDITPHAMLSRPIAGIRDQTLIITLPGSVKAIRENLGVVLPAIPHAIGLINSKPKSSLPESHRSKDYIKNSQIDSNLIINQNNQNNNNNNNNNNNNNNNNNSHNHHHHHHHSCGGSGKRGSSYNMTPVDEAIKIILEQCDNINNELEKVEITKSLGRILGEDISSVEPFPNFRASIKDGYAIRSKDGIGKYRLLGDSVAGNTGENLIPPQPQQPTNSINDDDNEKYCVRITTGAKIPDGYDSVVMIEETEMIGENMVSIEVTCKPGQDIREIGSDIASGTIVLNKGDKIGCAEIGLLATLGIQWVHCPKLPSISIISTGDELTDYQSKSDSMKSGIIRDSNSPTLATILQEISNHFGECCSRDNINLVGIIPDKLENLKDTLLDCSKKSDIIITSGGVSMGHLDLVKPLLEKIGTVHFGRVNMKPGKPLTFSTITTTTTDNNNQEEEKKKKTTLVFSLPGNPVSTVVTFYLFVVPALRKLGGFGIKNNGSQLNLPCVEVKLLDRIQLDHERPEYHRCTIEWDFQEHCFVSKSTGSQASCRLLSLKQANALLVLPQKHGHLEKGSMVKAILIGPINN.

Positions 1–19 (MSNTLTTERNITNSPTAAQ) are enriched in polar residues. The segment at 1–26 (MSNTLTTERNITNSPTAAQLNEKESG) is disordered. The MPT Mo-transferase stretch occupies residues 31–176 (EWIVGVLTTS…LPGSVKAIRE (146 aa)). Positions 222 to 244 (NQNNQNNNNNNNNNNNNNNNNNS) are enriched in low complexity. Disordered regions lie at residues 222–266 (NQNN…SSYN) and 344–364 (TGEN…NDDD). Residues 245–254 (HNHHHHHHHS) are compositionally biased toward basic residues. The MPT adenylyltransferase stretch occupies residues 260-718 (KRGSSYNMTP…KAILIGPINN (459 aa)).

The protein in the N-terminal section; belongs to the MoaB/Mog family. It in the C-terminal section; belongs to the MoeA family. As to quaternary structure, homotrimer, homodimer and homooligomer. Requires Mg(2+) as cofactor.

It is found in the cell membrane. The protein localises to the cytoplasm. It localises to the cytosol. The protein resides in the cytoskeleton. The enzyme catalyses molybdopterin + ATP + H(+) = adenylyl-molybdopterin + diphosphate. It carries out the reaction adenylyl-molybdopterin + molybdate = Mo-molybdopterin + AMP + H(+). The protein operates within cofactor biosynthesis; molybdopterin biosynthesis. Functionally, microtubule-associated protein involved in membrane protein-cytoskeleton interactions. Also has a catalytic activity and catalyzes two steps in the biosynthesis of the molybdenum cofactor. In the first step, molybdopterin is adenylated. Subsequently, molybdate is inserted into adenylated molybdopterin and AMP is released. In Dictyostelium discoideum (Social amoeba), this protein is Gephyrin (gphn).